The chain runs to 86 residues: MAVRIRLKRFGAKKRPFYRIVVADSRSPRDGRFIDEIGYYNPIAQPAEIKIDVEKAKKWLSVGAQPSDTVKSLFKKEGIIGNSASQ.

Belongs to the bacterial ribosomal protein bS16 family.

This is Small ribosomal subunit protein bS16 from Thermoanaerobacter pseudethanolicus (strain ATCC 33223 / 39E) (Clostridium thermohydrosulfuricum).